The primary structure comprises 320 residues: Acetyl-coenzyme A carboxylase carboxyl transferase subunit beta (320 aa).

Residues 25 to 294 enclose the CoA carboxyltransferase N-terminal domain; sequence VWTKCDSCGQ…AKDEDELLGE (270 aa). Residues Cys-29, Cys-32, Cys-48, and Cys-51 each coordinate Zn(2+). The segment at 29-51 adopts a C4-type zinc-finger fold; it reads CDSCGQVLYRAELERNLEVCPKC. A compositionally biased stretch (acidic residues) spans 295-310; it reads EMIADDIESSDNEPEI. A disordered region spans residues 295-320; sequence EMIADDIESSDNEPEINIETNKKEDV.

This sequence belongs to the AccD/PCCB family. Acetyl-CoA carboxylase is a heterohexamer composed of biotin carboxyl carrier protein (AccB), biotin carboxylase (AccC) and two subunits each of ACCase subunit alpha (AccA) and ACCase subunit beta (AccD). Requires Zn(2+) as cofactor.

It localises to the cytoplasm. It carries out the reaction N(6)-carboxybiotinyl-L-lysyl-[protein] + acetyl-CoA = N(6)-biotinyl-L-lysyl-[protein] + malonyl-CoA. Its pathway is lipid metabolism; malonyl-CoA biosynthesis; malonyl-CoA from acetyl-CoA: step 1/1. Component of the acetyl coenzyme A carboxylase (ACC) complex. Biotin carboxylase (BC) catalyzes the carboxylation of biotin on its carrier protein (BCCP) and then the CO(2) group is transferred by the transcarboxylase to acetyl-CoA to form malonyl-CoA. This is Acetyl-coenzyme A carboxylase carboxyl transferase subunit beta from Proteus mirabilis (strain HI4320).